The following is a 439-amino-acid chain: uncharacterized protein (439 aa).

The DAGKc domain maps to 65-208; that stretch reads TRPKRVFVLV…VYAFELTTEG (144 aa).

This is an uncharacterized protein from Caenorhabditis elegans.